Consider the following 597-residue polypeptide: Kelch-like protein 21 (597 aa).

The region spanning 35–103 (LDVTLEAAGG…SYTGRVAVSG (69 aa)) is the BTB domain. Positions 138–239 (CLDMQDFAEA…RRFYLLAHVE (102 aa)) constitute a BACK domain. 6 Kelch repeats span residues 287–335 (ILVL…ALGN), 336–382 (DIYV…VLNG), 384–422 (LYVVAADSTERYDHATDSWEALQPMTYPMDNCSTTACRG), 423–470 (RLYA…TLNG), 472–512 (MYFV…ALGG), and 513–560 (KLYV…SIFR). The tract at residues 570-597 (GRGFELNSGSSDVDAGHHRLPQNPEELQ) is disordered.

Component of the BCR(KLHL21) E3 ubiquitin ligase complex, at least composed of CUL3, KLHL21 and RBX1.

It is found in the cytoplasm. The protein resides in the cytoskeleton. It localises to the spindle. It participates in protein modification; protein ubiquitination. In terms of biological role, substrate-specific adapter of BCR (BTB-CUL3-RBX1) E3 ubiquitin-protein ligase complex required for efficient chromosome alignment and cytokinesis. The BCR(KLHL21) E3 ubiquitin ligase complex regulates localization of the chromosomal passenger complex (CPC) from chromosomes to the spindle midzone in anaphase and mediates the ubiquitination of AURKB. Ubiquitination of AURKB by BCR(KLHL21) E3 ubiquitin ligase complex may not lead to its degradation by the proteasome. This Rattus norvegicus (Rat) protein is Kelch-like protein 21 (Klhl21).